The sequence spans 278 residues: Putative ABC transporter ATP-binding protein MJ1572 (278 aa).

An ABC transporter domain is found at 5-242 (YRLVDVSYKY…LDELNLDVPE (238 aa)). An ATP-binding site is contributed by 38 to 45 (GPNGAGKT).

Belongs to the ABC transporter superfamily.

It is found in the cell membrane. Probably part of an ABC transporter complex. Responsible for energy coupling to the transport system. In Methanocaldococcus jannaschii (strain ATCC 43067 / DSM 2661 / JAL-1 / JCM 10045 / NBRC 100440) (Methanococcus jannaschii), this protein is Putative ABC transporter ATP-binding protein MJ1572.